We begin with the raw amino-acid sequence, 671 residues long: DNA ligase (671 aa).

Residues 32–36 (DAEYD), 81–82 (SL), and Glu-113 each bind NAD(+). Catalysis depends on Lys-115, which acts as the N6-AMP-lysine intermediate. NAD(+) is bound by residues Arg-136, Glu-173, Lys-290, and Lys-314. Residues Cys-408, Cys-411, Cys-426, and Cys-432 each coordinate Zn(2+). The BRCT domain maps to 593–671 (EIDSPFAGKT…EAEMIRLLGA (79 aa)).

It belongs to the NAD-dependent DNA ligase family. LigA subfamily. Mg(2+) serves as cofactor. Requires Mn(2+) as cofactor.

The enzyme catalyses NAD(+) + (deoxyribonucleotide)n-3'-hydroxyl + 5'-phospho-(deoxyribonucleotide)m = (deoxyribonucleotide)n+m + AMP + beta-nicotinamide D-nucleotide.. DNA ligase that catalyzes the formation of phosphodiester linkages between 5'-phosphoryl and 3'-hydroxyl groups in double-stranded DNA using NAD as a coenzyme and as the energy source for the reaction. It is essential for DNA replication and repair of damaged DNA. This chain is DNA ligase, found in Salmonella paratyphi A (strain ATCC 9150 / SARB42).